The chain runs to 970 residues: Isoleucine--tRNA ligase (970 aa).

The short motif at P65 to H75 is the 'HIGH' region element. E608 is a binding site for L-isoleucyl-5'-AMP. Positions K649 to S653 match the 'KMSKS' region motif. K652 contributes to the ATP binding site. Zn(2+) is bound by residues C943, C946, C962, and C965.

This sequence belongs to the class-I aminoacyl-tRNA synthetase family. IleS type 1 subfamily. As to quaternary structure, monomer. It depends on Zn(2+) as a cofactor.

It localises to the cytoplasm. The catalysed reaction is tRNA(Ile) + L-isoleucine + ATP = L-isoleucyl-tRNA(Ile) + AMP + diphosphate. In terms of biological role, catalyzes the attachment of isoleucine to tRNA(Ile). As IleRS can inadvertently accommodate and process structurally similar amino acids such as valine, to avoid such errors it has two additional distinct tRNA(Ile)-dependent editing activities. One activity is designated as 'pretransfer' editing and involves the hydrolysis of activated Val-AMP. The other activity is designated 'posttransfer' editing and involves deacylation of mischarged Val-tRNA(Ile). The sequence is that of Isoleucine--tRNA ligase from Ruegeria pomeroyi (strain ATCC 700808 / DSM 15171 / DSS-3) (Silicibacter pomeroyi).